Reading from the N-terminus, the 173-residue chain is Adenine phosphoribosyltransferase (173 aa).

The protein belongs to the purine/pyrimidine phosphoribosyltransferase family. Homodimer.

It is found in the cytoplasm. The enzyme catalyses AMP + diphosphate = 5-phospho-alpha-D-ribose 1-diphosphate + adenine. It functions in the pathway purine metabolism; AMP biosynthesis via salvage pathway; AMP from adenine: step 1/1. In terms of biological role, catalyzes a salvage reaction resulting in the formation of AMP, that is energically less costly than de novo synthesis. The sequence is that of Adenine phosphoribosyltransferase from Listeria monocytogenes serovar 1/2a (strain ATCC BAA-679 / EGD-e).